Here is a 200-residue protein sequence, read N- to C-terminus: Proteasome subunit beta 2 (200 aa).

Positions 1-10 (MSDQLELMTG) are cleaved as a propeptide — removed in mature form; by autocatalysis. Thr11 serves as the catalytic Nucleophile.

Belongs to the peptidase T1B family. The 20S proteasome core is composed of 14 alpha and 14 beta subunits that assemble into four stacked heptameric rings, resulting in a barrel-shaped structure. The two inner rings, each composed of seven catalytic beta subunits, are sandwiched by two outer rings, each composed of seven alpha subunits. The catalytic chamber with the active sites is on the inside of the barrel. Has a gated structure, the ends of the cylinder being occluded by the N-termini of the alpha-subunits. Is capped at one or both ends by the proteasome regulatory ATPase, PAN.

It is found in the cytoplasm. It catalyses the reaction Cleavage of peptide bonds with very broad specificity.. The formation of the proteasomal ATPase PAN-20S proteasome complex, via the docking of the C-termini of PAN into the intersubunit pockets in the alpha-rings, triggers opening of the gate for substrate entry. Interconversion between the open-gate and close-gate conformations leads to a dynamic regulation of the 20S proteasome proteolysis activity. Functionally, component of the proteasome core, a large protease complex with broad specificity involved in protein degradation. This is Proteasome subunit beta 2 from Caldivirga maquilingensis (strain ATCC 700844 / DSM 13496 / JCM 10307 / IC-167).